The following is a 1151-amino-acid chain: ATP-dependent RNA helicase ddx46 (1151 aa).

Composition is skewed to basic and acidic residues over residues 1-26 (MDEY…DNRN) and 35-51 (YRDD…DRSH). Disordered stretches follow at residues 1-138 (MDEY…SRFD), 166-224 (MYQQ…VFQQ), 287-358 (QELK…PLVN), and 424-449 (TSQM…DKTI). Low complexity predominate over residues 52–73 (YNNNNNNNNNNNNNNNNNNGNG). The segment covering 81-90 (SSQNKYQNHH) has biased composition (polar residues). 4 stretches are compositionally biased toward low complexity: residues 91–124 (QQSP…QPHI), 166–199 (MYQQ…FQHH), 207–224 (QPPV…VFQQ), and 291–339 (ASGS…TTSP). A compositionally biased stretch (acidic residues) spans 428–443 (IDDDEKLEEESEGEDD). A Q motif motif is present at residues 509–537 (QSWAQAGLTEKVHLLLKKFQYEKPTSIQA). Residues 540-718 (IPAIMNGRDL…KKILNKPLEI (179 aa)) enclose the Helicase ATP-binding domain. 553-560 (ARTGSGKT) is a binding site for ATP. Residues 666–669 (DEAD) carry the DEAD box motif. The 162-residue stretch at 729-890 (DIEQFVEVRP…KVPDELRKLN (162 aa)) folds into the Helicase C-terminal domain. The disordered stretch occupies residues 904 to 972 (LLAPTGFTGR…EKEKQLLSEK (69 aa)). The span at 915-930 (HKFDAAEEDKKNIERK) shows a compositional bias: basic and acidic residues. Positions 938-948 (IEEEEEEEDED) are enriched in acidic residues. Positions 949-972 (KEKAEKEKLAAASAEKEKQLLSEK) are enriched in basic and acidic residues.

It belongs to the DEAD box helicase family. DDX46/PRP5 subfamily. As to quaternary structure, component of the 17S U2 SnRNP complex, a ribonucleoprotein complex that contains small nuclear RNA (snRNA) U2 and a number of specific proteins.

It localises to the nucleus speckle. It catalyses the reaction ATP + H2O = ADP + phosphate + H(+). In terms of biological role, component of the 17S U2 SnRNP complex of the spliceosome, a large ribonucleoprotein complex that removes introns from transcribed pre-mRNAs. In Dictyostelium discoideum (Social amoeba), this protein is ATP-dependent RNA helicase ddx46 (helB1).